The following is a 318-amino-acid chain: Methionyl-tRNA formyltransferase (318 aa).

(6S)-5,6,7,8-tetrahydrofolate is bound at residue 110-113 (SLLP).

Belongs to the Fmt family.

It carries out the reaction L-methionyl-tRNA(fMet) + (6R)-10-formyltetrahydrofolate = N-formyl-L-methionyl-tRNA(fMet) + (6S)-5,6,7,8-tetrahydrofolate + H(+). Its function is as follows. Attaches a formyl group to the free amino group of methionyl-tRNA(fMet). The formyl group appears to play a dual role in the initiator identity of N-formylmethionyl-tRNA by promoting its recognition by IF2 and preventing the misappropriation of this tRNA by the elongation apparatus. This chain is Methionyl-tRNA formyltransferase, found in Lacticaseibacillus paracasei (strain ATCC 334 / BCRC 17002 / CCUG 31169 / CIP 107868 / KCTC 3260 / NRRL B-441) (Lactobacillus paracasei).